The following is a 344-amino-acid chain: Arginine N-succinyltransferase (344 aa).

A succinyl-CoA-binding site is contributed by leucine 125. Residue histidine 229 is the Proton donor of the active site.

It belongs to the arginine N-succinyltransferase family.

The catalysed reaction is succinyl-CoA + L-arginine = N(2)-succinyl-L-arginine + CoA + H(+). The protein operates within amino-acid degradation; L-arginine degradation via AST pathway; L-glutamate and succinate from L-arginine: step 1/5. Functionally, catalyzes the transfer of succinyl-CoA to arginine to produce N(2)-succinylarginine. This chain is Arginine N-succinyltransferase, found in Shigella flexneri serotype 5b (strain 8401).